The chain runs to 603 residues: Proline--tRNA ligase (603 aa).

The protein belongs to the class-II aminoacyl-tRNA synthetase family. ProS type 1 subfamily. Homodimer.

Its subcellular location is the cytoplasm. It carries out the reaction tRNA(Pro) + L-proline + ATP = L-prolyl-tRNA(Pro) + AMP + diphosphate. In terms of biological role, catalyzes the attachment of proline to tRNA(Pro) in a two-step reaction: proline is first activated by ATP to form Pro-AMP and then transferred to the acceptor end of tRNA(Pro). As ProRS can inadvertently accommodate and process non-cognate amino acids such as alanine and cysteine, to avoid such errors it has two additional distinct editing activities against alanine. One activity is designated as 'pretransfer' editing and involves the tRNA(Pro)-independent hydrolysis of activated Ala-AMP. The other activity is designated 'posttransfer' editing and involves deacylation of mischarged Ala-tRNA(Pro). The misacylated Cys-tRNA(Pro) is not edited by ProRS. This chain is Proline--tRNA ligase, found in Paenarthrobacter aurescens (strain TC1).